We begin with the raw amino-acid sequence, 192 residues long: Phosphoheptose isomerase (192 aa).

One can recognise an SIS domain in the interval 35 to 192; that stretch reads LIETLENQGK…CIERHFANKN (158 aa). 50–52 is a substrate binding site; it reads NGG. Positions 59 and 63 each coordinate Zn(2+). Substrate contacts are provided by residues Glu-63, 92 to 93, 118 to 120, Ser-123, and Gln-170; these read ND and STS. Zn(2+) is bound by residues Gln-170 and His-178.

This sequence belongs to the SIS family. GmhA subfamily. In terms of assembly, homotetramer. Zn(2+) is required as a cofactor.

It is found in the cytoplasm. The catalysed reaction is 2 D-sedoheptulose 7-phosphate = D-glycero-alpha-D-manno-heptose 7-phosphate + D-glycero-beta-D-manno-heptose 7-phosphate. The protein operates within carbohydrate biosynthesis; D-glycero-D-manno-heptose 7-phosphate biosynthesis; D-glycero-alpha-D-manno-heptose 7-phosphate and D-glycero-beta-D-manno-heptose 7-phosphate from sedoheptulose 7-phosphate: step 1/1. In terms of biological role, catalyzes the isomerization of sedoheptulose 7-phosphate in D-glycero-D-manno-heptose 7-phosphate. The protein is Phosphoheptose isomerase of Helicobacter pylori (strain Shi470).